Reading from the N-terminus, the 175-residue chain is MAAVSMSVALRQALWGRRVATVAAVSVSKVSTRSLSTSTWRLAQDQTRDTQLITVDEKLDITTITGVPEEHIKTRKARIFVPARNNMQSGVNNTKKWKMEFDTRERWENPLMGWASTADPLSNLVLTFSTKEDAVAFAEKNGWSYDVEERKVPKPKSKSYGANFSWNKRTRVSTK.

The transit peptide at 1–42 (MAAVSMSVALRQALWGRRVATVAAVSVSKVSTRSLSTSTWRL) directs the protein to the mitochondrion. The tract at residues 149 to 175 (ERKVPKPKSKSYGANFSWNKRTRVSTK) is disordered. Ser-173 is subject to Phosphoserine.

The protein belongs to the complex I NDUFS4 subunit family. Mammalian complex I is composed of 45 different subunits. This is a component of the iron-sulfur (IP) fragment of the enzyme. Interacts with BCAP31 and TOMM40; the interaction mediates its translocation to the mitochondria; the interaction with BCAP31 is direct. Post-translationally, phosphorylated.

It is found in the mitochondrion inner membrane. Functionally, accessory subunit of the mitochondrial membrane respiratory chain NADH dehydrogenase (Complex I), that is believed not to be involved in catalysis. Complex I functions in the transfer of electrons from NADH to the respiratory chain. The immediate electron acceptor for the enzyme is believed to be ubiquinone. This is NADH dehydrogenase [ubiquinone] iron-sulfur protein 4, mitochondrial (NDUFS4) from Bos taurus (Bovine).